A 510-amino-acid polypeptide reads, in one-letter code: 2,3-bisphosphoglycerate-independent phosphoglycerate mutase (510 aa).

D12 contributes to the Mn(2+) binding site. Y36 carries the post-translational modification Phosphotyrosine. Residue S62 participates in Mn(2+) binding. The active-site Phosphoserine intermediate is S62. Residues H123, R153 to D154, R185, R191, R261 to R264, and K336 each bind substrate. Residues D403, H407, D444, H445, and H462 each coordinate Mn(2+).

It belongs to the BPG-independent phosphoglycerate mutase family. Monomer. The cofactor is Mn(2+).

It catalyses the reaction (2R)-2-phosphoglycerate = (2R)-3-phosphoglycerate. It functions in the pathway carbohydrate degradation; glycolysis; pyruvate from D-glyceraldehyde 3-phosphate: step 3/5. Functionally, essential for rapid growth and for sporulation. Catalyzes the interconversion of 2-phosphoglycerate and 3-phosphoglycerate. The protein is 2,3-bisphosphoglycerate-independent phosphoglycerate mutase of Shouchella clausii (strain KSM-K16) (Alkalihalobacillus clausii).